We begin with the raw amino-acid sequence, 641 residues long: Pumilio homolog 24 (641 aa).

The tract at residues 1-82 (MSSKGLKPQK…LTEARKKKRK (82 aa)) is disordered. Positions 9–404 (QKSTKRKDTD…RPLLQLLHPN (396 aa)) constitute a PUM-HD domain. 2 stretches are compositionally biased toward basic and acidic residues: residues 14–27 (RKDT…DSLK) and 67–76 (RVQAKELTEA). 5 Pumilio repeats span residues 118–153 (KMKG…VLFT), 154–189 (ELQP…ACIS), 190–225 (SLRG…ELLA), 303–340 (QLLT…KIIK), and 341–378 (AMKE…IIVR). The segment at 427-468 (MDKSETSSKTKDTDGNEIGEETKDEQEDTVAEHSDHEENVTA) is disordered. Basic and acidic residues predominate over residues 428–440 (DKSETSSKTKDTD). Over residues 441–455 (GNEIGEETKDEQEDT) the composition is skewed to acidic residues. The segment covering 456 to 468 (VAEHSDHEENVTA) has biased composition (basic and acidic residues).

Its subcellular location is the nucleus. It localises to the nucleolus. Its function is as follows. Sequence-specific RNA-binding protein that regulates translation and mRNA stability by binding the 3'-UTR of target mRNAs. This Arabidopsis thaliana (Mouse-ear cress) protein is Pumilio homolog 24 (APUM24).